Consider the following 137-residue polypeptide: Thionin BTH7 (137 aa).

The N-terminal stretch at 1 to 28 (MATNKSIKSVVICVLILGLVLEQVQVEG) is a signal peptide. 4 disulfide bridges follow: cysteine 31–cysteine 68, cysteine 32–cysteine 60, cysteine 40–cysteine 58, and cysteine 44–cysteine 54. The propeptide at 75–137 (LNLLPESGEP…DGEVIQSVEA (63 aa)) is acidic domain.

The protein belongs to the plant thionin (TC 1.C.44) family. 4 C-C subfamily.

It localises to the secreted. Its function is as follows. Thionins are small plant proteins which are toxic to animal cells. They seem to exert their toxic effect at the level of the cell membrane. Their precise function is not known. The sequence is that of Thionin BTH7 from Hordeum vulgare (Barley).